The chain runs to 466 residues: ATP synthase subunit beta (466 aa).

148–155 lines the ATP pocket; the sequence is GGAGVGKT.

This sequence belongs to the ATPase alpha/beta chains family. In terms of assembly, F-type ATPases have 2 components, CF(1) - the catalytic core - and CF(0) - the membrane proton channel. CF(1) has five subunits: alpha(3), beta(3), gamma(1), delta(1), epsilon(1). CF(0) has three main subunits: a(1), b(2) and c(9-12). The alpha and beta chains form an alternating ring which encloses part of the gamma chain. CF(1) is attached to CF(0) by a central stalk formed by the gamma and epsilon chains, while a peripheral stalk is formed by the delta and b chains.

Its subcellular location is the cell inner membrane. It catalyses the reaction ATP + H2O + 4 H(+)(in) = ADP + phosphate + 5 H(+)(out). In terms of biological role, produces ATP from ADP in the presence of a proton gradient across the membrane. The catalytic sites are hosted primarily by the beta subunits. This is ATP synthase subunit beta from Herminiimonas arsenicoxydans.